A 128-amino-acid chain; its full sequence is uncharacterized protein (128 aa).

A run of 4 helical transmembrane segments spans residues 5 to 25, 27 to 47, 60 to 80, and 87 to 107; these read ILAL…YSMM, PVLV…PLFL, QLWW…FIGL, and SAVT…HFFF. One can recognise an EamA domain in the interval 9–110; sequence LIWSSSLIVG…FVGHFFFKTK (102 aa).

It is found in the cell membrane. This is an uncharacterized protein from Haemophilus influenzae (strain ATCC 51907 / DSM 11121 / KW20 / Rd).